The following is a 289-amino-acid chain: Acetyl-coenzyme A carboxylase carboxyl transferase subunit beta (289 aa).

A CoA carboxyltransferase N-terminal domain is found at 30–289; sequence IWRECPRCHS…SNAWRANHDK (260 aa). Zn(2+)-binding residues include cysteine 34, cysteine 37, cysteine 52, and cysteine 55. A C4-type zinc finger spans residues 34 to 55; it reads CPRCHSRFYYRRFGNFDVCPEC.

The protein belongs to the AccD/PCCB family. In terms of assembly, acetyl-CoA carboxylase is a heterohexamer composed of biotin carboxyl carrier protein (AccB), biotin carboxylase (AccC) and two subunits each of ACCase subunit alpha (AccA) and ACCase subunit beta (AccD). Zn(2+) is required as a cofactor.

Its subcellular location is the cytoplasm. It carries out the reaction N(6)-carboxybiotinyl-L-lysyl-[protein] + acetyl-CoA = N(6)-biotinyl-L-lysyl-[protein] + malonyl-CoA. The protein operates within lipid metabolism; malonyl-CoA biosynthesis; malonyl-CoA from acetyl-CoA: step 1/1. In terms of biological role, component of the acetyl coenzyme A carboxylase (ACC) complex. Biotin carboxylase (BC) catalyzes the carboxylation of biotin on its carrier protein (BCCP) and then the CO(2) group is transferred by the transcarboxylase to acetyl-CoA to form malonyl-CoA. The sequence is that of Acetyl-coenzyme A carboxylase carboxyl transferase subunit beta from Oenococcus oeni (strain ATCC BAA-331 / PSU-1).